The following is a 651-amino-acid chain: Forkhead box protein K2 (651 aa).

Positions 1-13 are enriched in low complexity; it reads MAAAAALSGAGAP. The disordered stretch occupies residues 1–29; the sequence is MAAAAALSGAGAPPAGGGAGGGGSPPGGW. The span at 14 to 26 shows a compositional bias: gly residues; the sequence is PAGGGAGGGGSPP. Serine 24 carries the post-translational modification Phosphoserine. Positions 48 to 119 constitute an FHA domain; sequence VTIGRNSSQG…NGVFVDGVFQ (72 aa). The tract at residues 120–162 is required for interaction with DVL2 and SUDS3; the sequence is RRGAPPLQLPRVCTFRFPSTNIKITFTALSSEKREKQEAPESP. Residue arginine 135 is modified to Omega-N-methylarginine. 2 disordered regions span residues 150–171 and 194–251; these read SEKREKQEAPESPVKPVQPHIS and TISA…SKPP. Glycyl lysine isopeptide (Lys-Gly) (interchain with G-Cter in SUMO2) cross-links involve residues lysine 152 and lysine 155. Residues 194–203 are compositionally biased toward polar residues; it reads TISAANSCPS. A Phosphoserine modification is found at serine 230. Residues 233–249 show a composition bias toward basic and acidic residues; it reads ENEKEASGGDSPKDDSK. Residues 249 to 344 constitute a DNA-binding region (fork-head); it reads KPPYSYAQLI…EQAFRKRRPR (96 aa). The tract at residues 291-309 is DNA-binding; major groove; it reads KGWQNSIRHNLSLNRYFIK. Mg(2+)-binding residues include leucine 301, serine 302, asparagine 304, and phenylalanine 307. DNA-binding; minor groove stretches follow at residues 319–323 and 339–344; these read KGSFW and RKRRPR. Residues 350-399 are disordered; that stretch reads RTPLGPLSSRSAPASPNHAGVLSAHSSGAQTPESLSREGSPAPLEPEPGA. Serine 364 carries the phosphoserine modification. Positions 373 to 383 are enriched in polar residues; the sequence is AHSSGAQTPES. 3 positions are modified to phosphoserine: serine 389, serine 415, and serine 419. A Glycyl lysine isopeptide (Lys-Gly) (interchain with G-Cter in SUMO2) cross-link involves residue lysine 518. Serine 590 is modified (phosphoserine). Over residues 601–614 the composition is skewed to polar residues; it reads ASASLPTKRQNGDQ. Residues 601–623 form a disordered region; the sequence is ASASLPTKRQNGDQAEQPELKRV. Lysine 624 participates in a covalent cross-link: Glycyl lysine isopeptide (Lys-Gly) (interchain with G-Cter in SUMO2).

As to quaternary structure, component of SIN3A-, but not SIN3B-, containing multiprotein complexes. Interacts with DVL1, DVL2 (when phosphorylated) and DVL3; the interaction induces DVL2 nuclear translocation. Interacts with SUDS3. Interacts with BAP1 (when phosphorylated); leading to recruit the PR-DUB complex and repress FOXK2 target genes. Accessory component of the polycomb repressive deubiquitinase (PR-DUB) complex, at least composed of BAP1, one of ASXL1, ASXL2 or (probably) ASXL3 and one of MBD5 or MBD6. The PR-DUB core associates with a number of accessory proteins, including FOXK1, FOXK2, KDM1B, HCFC1 and OGT. In terms of processing, hyperphosphorylated during mitosis by CDK1 and, to a lower extent, CDK2. Phosphorylation at Ser-364 and Ser-419 affects stability by promoting degradation. Expressed in a wide range of adult brain regions, namely the piriform cortex, the major islands of Calleja and cells lining the lateral ventricles, the bed nucleus of stria terminalis, the paraventricular thalamic nucleus, habenula and all structures of the hippocampus. Also present in the hypothalamus, cerebral cortex and in the Purkinje cell layer in the cerebellum. Additionally expressed in dopamine neurons of the substantia and more sparsely in the ventral tegmental area.

The protein localises to the nucleus. It localises to the cytoplasm. Functionally, transcriptional regulator involved in different processes such as glucose metabolism, aerobic glycolysis and autophagy. Recognizes and binds the forkhead DNA sequence motif (5'-GTAAACA-3') and can both act as a transcription activator or repressor, depending on the context. Together with FOXK1, acts as a key regulator of metabolic reprogramming towards aerobic glycolysis, a process in which glucose is converted to lactate in the presence of oxygen. Acts by promoting expression of enzymes for glycolysis (such as hexokinase-2 (HK2), phosphofructokinase, pyruvate kinase (PKLR) and lactate dehydrogenase), while suppressing further oxidation of pyruvate in the mitochondria by up-regulating pyruvate dehydrogenase kinases PDK1 and PDK4. Probably plays a role in gluconeogenesis during overnight fasting, when lactate from white adipose tissue and muscle is the main substrate. Together with FOXK1, acts as a negative regulator of autophagy in skeletal muscle: in response to starvation, enters the nucleus, binds the promoters of autophagy genes and represses their expression, preventing proteolysis of skeletal muscle proteins. In addition to the 5'-GTAAACA-3' DNA motif, also binds the 5'-TGANTCA-3' palindromic DNA motif, and co-associates with JUN/AP-1 to activate transcription. Also able to bind to a minimal DNA heteroduplex containing a G/T-mismatch with 5'-TRT[G/T]NB-3' sequence. Binds to NFAT-like motifs (purine-rich) in the IL2 promoter. Positively regulates WNT/beta-catenin signaling by translocating DVL proteins into the nucleus. Accessory component of the polycomb repressive deubiquitinase (PR-DUB) complex; recruits the PR-DUB complex to specific FOXK2-bound genes. The polypeptide is Forkhead box protein K2 (Mus musculus (Mouse)).